The sequence spans 61 residues: Metallothionein (61 aa).

Met1 carries the N-acetylmethionine modification. The segment at 1–29 is beta; sequence MDPNCSCAAGGSCTCAGSCKCKECKCTSC. A divalent metal cation is bound by residues Cys5, Cys7, Cys13, Cys15, Cys19, Cys21, Cys24, Cys26, Cys29, Cys33, Cys34, Cys36, Cys37, Cys41, Cys44, Cys48, Cys50, Cys57, Cys59, and Cys60. The alpha stretch occupies residues 30–61; it reads KKSCCSCCPPGCTKCAQGCVCKGASDKCNCCA.

The protein belongs to the metallothionein superfamily. Type 1 family. In terms of assembly, monomer.

In terms of biological role, metallothioneins have a high content of cysteine residues that bind various heavy metals. The protein is Metallothionein of Balaena mysticetus (Bowhead whale).